We begin with the raw amino-acid sequence, 191 residues long: MKKFLFKQKFCESLPKSFSKTLLALSLGLILLGVFIPFPKVPKHQSVPLALHFTEHYARFIPTILSVAIPLIQRDAVGLFQVANASIATTFLTHATKRALNHVTINDQRLGERPYGGNFNMPSGHSSMVGLAVAFLMRRYSVKKYLWLLPLIPLTMLARIYLDMHTIGAVLAGLGTGMLCVGLFTSPKNLN.

5 consecutive transmembrane segments (helical) span residues 22–42 (LLAL…PKVP), 60–80 (FIPT…VGLF), 117–137 (GNFN…AFLM), 145–162 (YLWL…RIYL), and 164–184 (MHTI…VGLF).

It belongs to the lipid A LpxE 1-phosphatase family.

The protein resides in the cell inner membrane. It participates in bacterial outer membrane biogenesis; LPS lipid A biosynthesis. Its function is as follows. Removes the 1-phosphate group from tetra- and probably hexaacylated lipid A species. Absence of the 1-phosphate group renders the bacteria partially resistant to host-derived cationic antimicrobial peptides (CAMP), allowing it to camouflage itself from the host innate immune response, and plays a role in the long-term colonization of the host's stomach. The sequence is that of Lipid A 1-phosphatase from Helicobacter pylori (strain J99 / ATCC 700824) (Campylobacter pylori J99).